The primary structure comprises 100 residues: Integration host factor subunit alpha (100 aa).

It belongs to the bacterial histone-like protein family. As to quaternary structure, heterodimer of an alpha and a beta chain.

Functionally, this protein is one of the two subunits of integration host factor, a specific DNA-binding protein that functions in genetic recombination as well as in transcriptional and translational control. The chain is Integration host factor subunit alpha from Caulobacter sp. (strain K31).